A 124-amino-acid polypeptide reads, in one-letter code: Holo-[acyl-carrier-protein] synthase (124 aa).

Asp-8 and Glu-56 together coordinate Mg(2+).

This sequence belongs to the P-Pant transferase superfamily. AcpS family. It depends on Mg(2+) as a cofactor.

Its subcellular location is the cytoplasm. The catalysed reaction is apo-[ACP] + CoA = holo-[ACP] + adenosine 3',5'-bisphosphate + H(+). Its function is as follows. Transfers the 4'-phosphopantetheine moiety from coenzyme A to a Ser of acyl-carrier-protein. This chain is Holo-[acyl-carrier-protein] synthase, found in Maridesulfovibrio salexigens (strain ATCC 14822 / DSM 2638 / NCIMB 8403 / VKM B-1763) (Desulfovibrio salexigens).